Consider the following 319-residue polypeptide: Probable arabinan endo-1,5-alpha-L-arabinosidase A (319 aa).

A signal peptide spans 1–19 (MYLQSSLALVLLRAAVVHG). D34 serves as the catalytic Proton acceptor. A glycan (N-linked (GlcNAc...) asparagine) is linked at N53. E198 (proton donor) is an active-site residue.

Belongs to the glycosyl hydrolase 43 family.

It localises to the secreted. It catalyses the reaction Endohydrolysis of (1-&gt;5)-alpha-arabinofuranosidic linkages in (1-&gt;5)-arabinans.. The protein operates within glycan metabolism; L-arabinan degradation. Endo-1,5-alpha-L-arabinanase involved in degradation of pectin. Its preferred substrate is linear 1,5-alpha-L-arabinan. This Aspergillus flavus (strain ATCC 200026 / FGSC A1120 / IAM 13836 / NRRL 3357 / JCM 12722 / SRRC 167) protein is Probable arabinan endo-1,5-alpha-L-arabinosidase A (abnA).